Consider the following 241-residue polypeptide: Ribosome assembly factor mrt4 (241 aa).

This sequence belongs to the universal ribosomal protein uL10 family. Associates with the pre-60S ribosomal particle.

The protein localises to the nucleus. The protein resides in the nucleolus. It localises to the cytoplasm. Component of the ribosome assembly machinery. Nuclear paralog of the ribosomal protein P0, it binds pre-60S subunits at an early stage of assembly in the nucleolus, and is replaced by P0 in cytoplasmic pre-60S subunits and mature 80S ribosomes. This is Ribosome assembly factor mrt4 from Schizosaccharomyces pombe (strain 972 / ATCC 24843) (Fission yeast).